Here is a 318-residue protein sequence, read N- to C-terminus: Transaldolase (318 aa).

Lys-132 acts as the Schiff-base intermediate with substrate in catalysis.

The protein belongs to the transaldolase family. Type 1 subfamily. Homodimer.

It is found in the cytoplasm. The catalysed reaction is D-sedoheptulose 7-phosphate + D-glyceraldehyde 3-phosphate = D-erythrose 4-phosphate + beta-D-fructose 6-phosphate. It participates in carbohydrate degradation; pentose phosphate pathway; D-glyceraldehyde 3-phosphate and beta-D-fructose 6-phosphate from D-ribose 5-phosphate and D-xylulose 5-phosphate (non-oxidative stage): step 2/3. Transaldolase is important for the balance of metabolites in the pentose-phosphate pathway. The sequence is that of Transaldolase from Shewanella pealeana (strain ATCC 700345 / ANG-SQ1).